The following is a 1905-amino-acid chain: Transport and Golgi organization protein 1 homolog (1905 aa).

A signal peptide spans 1-22 (MAAAQGLLFWLLLLGPPCRVPG). Residues 23-1141 (QPEQDPGRRF…EPASVTPLEN (1119 aa)) lie on the Lumenal side of the membrane. Residues 45–107 (MLMYRGEALE…PKDLIQVVHE (63 aa)) form the SH3 domain. Basic and acidic residues predominate over residues 154 to 167 (SEKVKEKTAQRVEE). Disordered stretches follow at residues 154 to 259 (SEKV…HEQE) and 313 to 621 (TVGK…IKDR). The N-linked (GlcNAc...) asparagine glycan is linked to Asn-173. Acidic residues predominate over residues 173–190 (NESDAEPEPGEPNSEESE). Positions 198-208 (AELRERSEAQK) are enriched in basic and acidic residues. The segment covering 209–220 (SHPQVNSQTGHA) has biased composition (polar residues). 2 positions are modified to phosphoserine: Ser-226 and Ser-229. Residues 234-245 (LQDKLKVPDSEN) show a composition bias toward basic and acidic residues. N-linked (GlcNAc...) asparagine glycosylation is present at Asn-246. The segment covering 246–255 (NKTSNSSQVS) has biased composition (polar residues). Positions 317-327 (EEEENKEDFDE) are enriched in acidic residues. 2 stretches are compositionally biased toward basic and acidic residues: residues 337 to 366 (EDTK…KVEE) and 373 to 386 (KKGD…REDT). The span at 392–414 (MEGEENTDTDLESSDSKEEDDPL) shows a compositional bias: acidic residues. Basic and acidic residues-rich tracts occupy residues 419-436 (RLGK…KAAD) and 459-480 (HMKD…HEVG). A coiled-coil region spans residues 467 to 527 (VEEPRRDWVQ…ANQENDLKGA (61 aa)). Polar residues predominate over residues 488–500 (DQAVQGSSQSGHL). Residues 531–542 (ISKEMLHEEKPS) are compositionally biased toward basic and acidic residues. A glycan (N-linked (GlcNAc...) asparagine) is linked at Asn-627. Disordered stretches follow at residues 657–908 (QQGG…PHAP), 1036–1059 (APPA…QPPL), and 1085–1118 (PVTR…TPVD). Positions 669–714 (VSEKRELPEEEVTRVTKDASDEGQEVRKTGQTDSIEGRGFRPKEPN) are enriched in basic and acidic residues. Acidic residues predominate over residues 715–730 (PEDEDYSPEELLEDEN). Basic and acidic residues-rich tracts occupy residues 736–751 (QSKE…RLDV), 766–789 (TDPE…KNET), 842–859 (SQKK…EGHP), and 868–884 (PGVE…EKFV). Residue Ser-873 is modified to Phosphoserine. An intramembrane segment occupies 1142 to 1162 (AIAFIYSLVFHLTKTLLATLP). The Lumenal portion of the chain corresponds to 1163 to 1173 (DDVQPGPDFYG). The helical transmembrane segment at 1174–1194 (LPWKPVLITASLGIVSFAVFF) threads the bilayer. Over 1195-1905 (WRTVLAVKSR…DCSPALKQSP (711 aa)) the chain is Cytoplasmic. Residues 1208–1647 (VTEQQISEKL…VIVKPMPGRP (440 aa)) form a mediates interaction with MIA2 region. Positions 1211 to 1393 (QQISEKLKNI…SQKDLEVALT (183 aa)) form a coiled coil. The segment at 1416–1443 (SESEDQNKGGSESDELANGEVGGDRSEK) is disordered. Ser-1428 is subject to Phosphoserine. The stretch at 1484 to 1636 (NLEDQIKKLE…TQKMAMMQEE (153 aa)) forms a coiled coil. A disordered region spans residues 1639-1905 (IVKPMPGRPN…DCSPALKQSP (267 aa)). A compositionally biased stretch (polar residues) spans 1647–1664 (PNTQNPPRRGPLSQNGSF). Phosphoserine occurs at positions 1663, 1675, 1703, 1724, 1738, and 1742. Positions 1748–1905 (DEGKVSMAAK…DCSPALKQSP (158 aa)) are proline-rich domain (PRD); mediates interaction with the COPII coat subunits SEC23A and SEC23B. A compositionally biased stretch (pro residues) spans 1776–1806 (LLPPIRYGPPPQLCGPFGPRPLPPPFGPGMR). Residue Arg-1781 is modified to Asymmetric dimethylarginine. Residues 1785-1845 (PPQLCGPFGP…GHAPFRPLGS (61 aa)) form an SEC16A-interacting region (SIR); required for its localization to endoplasmic reticulum exit sites and for its interaction with SEC16A region. Over residues 1821-1831 (GKRDLPLDPRE) the composition is skewed to basic and acidic residues. Phosphoserine is present on residues Ser-1890 and Ser-1904. Residues 1891–1905 (QGASQDCSPALKQSP) are compositionally biased toward polar residues.

Belongs to the MIA/OTOR family. Tango1 subfamily. As to quaternary structure, interacts with MIA2. Interacts (via SH3 domain) with COL7A1. Interacts with the COPII coat subunits SEC23A, SEC23B and maybe SEC24C. May interact with APOB and MIA2. Interacts with SEC16A.

Its subcellular location is the endoplasmic reticulum membrane. Its function is as follows. Plays a role in the transport of cargos that are too large to fit into COPII-coated vesicles and require specific mechanisms to be incorporated into membrane-bound carriers and exported from the endoplasmic reticulum. This protein is required for collagen VII (COL7A1) secretion by loading COL7A1 into transport carriers. It may participate in cargo loading of COL7A1 at endoplasmic reticulum exit sites by binding to COPII coat subunits Sec23/24 and guiding SH3-bound COL7A1 into a growing carrier. Does not play a role in global protein secretion and is apparently specific to COL7A1 cargo loading. However, it may participate in secretion of other proteins in cells that do not secrete COL7A1. It is also specifically required for the secretion of lipoproteins by participating in their export from the endoplasmic reticulum. Required for correct assembly of COPII coat components at endoplasmic reticulum exit sites (ERES) and for the localization of SEC16A and membrane-bound ER-resident complexes consisting of MIA2 and PREB/SEC12 to ERES. The chain is Transport and Golgi organization protein 1 homolog from Bos taurus (Bovine).